Consider the following 538-residue polypeptide: Poly [ADP-ribose] polymerase 2 (538 aa).

One can recognise a WGR domain in the interval 1–94 (MSIINDENGR…RDDEPVPNKY (94 aa)). A disordered region spans residues 104–133 (RQTEKEVKKEEPEPEPKVDEKNTRGRKKRG). Over residues 105–126 (QTEKEVKKEEPEPEPKVDEKNT) the composition is skewed to basic and acidic residues. The region spanning 148–285 (VEEVNEKLKE…GSIEASLELK (138 aa)) is the PARP alpha-helical domain. The PARP catalytic domain occupies 309–535 (EPVSEEIAGK…VKVDRLTAKE (227 aa)). The tract at residues 357–381 (QEVPKKRGRKSTKTAAPTVPPPTTK) is disordered.

Belongs to the ARTD/PARP family.

Its subcellular location is the nucleus. The enzyme catalyses NAD(+) + (ADP-D-ribosyl)n-acceptor = nicotinamide + (ADP-D-ribosyl)n+1-acceptor + H(+).. The catalysed reaction is L-aspartyl-[protein] + NAD(+) = 4-O-(ADP-D-ribosyl)-L-aspartyl-[protein] + nicotinamide. It catalyses the reaction L-glutamyl-[protein] + NAD(+) = 5-O-(ADP-D-ribosyl)-L-glutamyl-[protein] + nicotinamide. Inhibited by N-(6-oxo-5,6-dihydrophenanthridin-2-yl)-N,N-dimethylacetamide HCl (PJ34), 1,5-dihydroxyisoquinoline (DHQ) and 3-aminobenzamide (3AB). Poly[ADP-ribose] polymerase modifies various nuclear proteins by poly(ADP-ribosyl)ation, a post-translational modification synthesized after DNA damage that appears as an obligatory step in a detection/signaling pathway leading to the reparation of DNA strand breaks and programmed cell death. The protein is Poly [ADP-ribose] polymerase 2 of Caenorhabditis elegans.